A 307-amino-acid polypeptide reads, in one-letter code: S-methyl-5'-thioadenosine phosphorylase (307 aa).

Phosphate contacts are provided by residues S16, 59-60 (RH), and 92-93 (SA). Residue M198 participates in substrate binding. S199 contributes to the phosphate binding site. Position 222–224 (222–224 (DYD)) interacts with substrate.

It belongs to the PNP/MTAP phosphorylase family. MTAP subfamily. As to quaternary structure, homotrimer.

The protein resides in the cytoplasm. It is found in the nucleus. The catalysed reaction is S-methyl-5'-thioadenosine + phosphate = 5-(methylsulfanyl)-alpha-D-ribose 1-phosphate + adenine. The protein operates within amino-acid biosynthesis; L-methionine biosynthesis via salvage pathway; S-methyl-5-thio-alpha-D-ribose 1-phosphate from S-methyl-5'-thioadenosine (phosphorylase route): step 1/1. Catalyzes the reversible phosphorylation of S-methyl-5'-thioadenosine (MTA) to adenine and 5-methylthioribose-1-phosphate. Involved in the breakdown of MTA, a major by-product of polyamine biosynthesis. Responsible for the first step in the methionine salvage pathway after MTA has been generated from S-adenosylmethionine. Has broad substrate specificity with 6-aminopurine nucleosides as preferred substrates. The sequence is that of S-methyl-5'-thioadenosine phosphorylase from Schizosaccharomyces pombe (strain 972 / ATCC 24843) (Fission yeast).